A 466-amino-acid chain; its full sequence is Cysteine--tRNA ligase (466 aa).

Cys27 is a binding site for Zn(2+). Residues 29-39 carry the 'HIGH' region motif; the sequence is PTVYNFFHIGN. Residues Cys207, His232, and Glu236 each coordinate Zn(2+). A 'KMSKS' region motif is present at residues 264-268; that stretch reads KMSKS. An ATP-binding site is contributed by Lys267.

Belongs to the class-I aminoacyl-tRNA synthetase family. As to quaternary structure, monomer. Zn(2+) is required as a cofactor.

It localises to the cytoplasm. It carries out the reaction tRNA(Cys) + L-cysteine + ATP = L-cysteinyl-tRNA(Cys) + AMP + diphosphate. The polypeptide is Cysteine--tRNA ligase (Clostridium beijerinckii (strain ATCC 51743 / NCIMB 8052) (Clostridium acetobutylicum)).